A 142-amino-acid polypeptide reads, in one-letter code: Small ribosomal subunit protein uS12 (142 aa).

Residues 1–30 (MGKTRGMGAARKLKNHRRRQRWADKSYKKS) form a disordered region. Over residues 11–20 (RKLKNHRRRQ) the composition is skewed to basic residues. Basic and acidic residues predominate over residues 21–30 (RWADKSYKKS). Residue P61 is modified to Hydroxyproline.

The protein belongs to the universal ribosomal protein uS12 family.

The polypeptide is Small ribosomal subunit protein uS12 (RPS23) (Fragaria ananassa (Strawberry)).